A 363-amino-acid polypeptide reads, in one-letter code: Chorismate synthase (363 aa).

Arg48 and Arg54 together coordinate NADP(+). Residues 131 to 133, 244 to 245, Gly288, 303 to 307, and Arg329 contribute to the FMN site; these read RSS, NA, and KPTSS.

The protein belongs to the chorismate synthase family. As to quaternary structure, homotetramer. Requires FMNH2 as cofactor.

It catalyses the reaction 5-O-(1-carboxyvinyl)-3-phosphoshikimate = chorismate + phosphate. It functions in the pathway metabolic intermediate biosynthesis; chorismate biosynthesis; chorismate from D-erythrose 4-phosphate and phosphoenolpyruvate: step 7/7. Catalyzes the anti-1,4-elimination of the C-3 phosphate and the C-6 proR hydrogen from 5-enolpyruvylshikimate-3-phosphate (EPSP) to yield chorismate, which is the branch point compound that serves as the starting substrate for the three terminal pathways of aromatic amino acid biosynthesis. This reaction introduces a second double bond into the aromatic ring system. This Hyphomonas neptunium (strain ATCC 15444) protein is Chorismate synthase.